The primary structure comprises 459 residues: Argininosuccinate lyase (459 aa).

The protein belongs to the lyase 1 family. Argininosuccinate lyase subfamily.

The protein localises to the cytoplasm. The catalysed reaction is 2-(N(omega)-L-arginino)succinate = fumarate + L-arginine. The protein operates within amino-acid biosynthesis; L-arginine biosynthesis; L-arginine from L-ornithine and carbamoyl phosphate: step 3/3. The chain is Argininosuccinate lyase from Staphylococcus aureus (strain MSSA476).